The primary structure comprises 469 residues: Probable monogalactosyldiacylglycerol synthase 2, chloroplastic (469 aa).

Residues methionine 1–glycine 42 constitute a chloroplast transit peptide.

Belongs to the glycosyltransferase 28 family.

It localises to the plastid. Its subcellular location is the chloroplast membrane. It catalyses the reaction a 1,2-diacyl-sn-glycerol + UDP-alpha-D-galactose = a 1,2-diacyl-3-O-(beta-D-galactosyl)-sn-glycerol + UDP + H(+). In terms of biological role, involved in the synthesis of the major structural component of photosynthetic membranes. The polypeptide is Probable monogalactosyldiacylglycerol synthase 2, chloroplastic (MGD2) (Oryza sativa subsp. japonica (Rice)).